Consider the following 129-residue polypeptide: Small ribosomal subunit protein uS11 (129 aa).

It belongs to the universal ribosomal protein uS11 family. As to quaternary structure, part of the 30S ribosomal subunit. Interacts with proteins S7 and S18. Binds to IF-3.

Its function is as follows. Located on the platform of the 30S subunit, it bridges several disparate RNA helices of the 16S rRNA. Forms part of the Shine-Dalgarno cleft in the 70S ribosome. The protein is Small ribosomal subunit protein uS11 of Zymomonas mobilis subsp. mobilis (strain ATCC 31821 / ZM4 / CP4).